A 478-amino-acid polypeptide reads, in one-letter code: Glutamate--tRNA ligase (478 aa).

Residues 9 to 19 carry the 'HIGH' region motif; that stretch reads PSPTGLLHIGT. A 'KMSKS' region motif is present at residues 248–252; that stretch reads KLSKR. Lys-251 lines the ATP pocket.

The protein belongs to the class-I aminoacyl-tRNA synthetase family. Glutamate--tRNA ligase type 1 subfamily. In terms of assembly, monomer.

The protein resides in the cytoplasm. The enzyme catalyses tRNA(Glu) + L-glutamate + ATP = L-glutamyl-tRNA(Glu) + AMP + diphosphate. Its function is as follows. Catalyzes the attachment of glutamate to tRNA(Glu) in a two-step reaction: glutamate is first activated by ATP to form Glu-AMP and then transferred to the acceptor end of tRNA(Glu). The polypeptide is Glutamate--tRNA ligase (Prochlorococcus marinus subsp. pastoris (strain CCMP1986 / NIES-2087 / MED4)).